Here is a 236-residue protein sequence, read N- to C-terminus: Nopaline transport system permease protein NocQ (236 aa).

One can recognise an ABC transmembrane type-1 domain in the interval 21–222 (AMMTVVVAAC…LLSSVSNRGF (202 aa)). 4 consecutive transmembrane segments (helical) span residues 25-45 (VVVA…FAAA), 63-83 (VVRG…GGTL), 102-122 (IFVI…TEVI), and 199-219 (QPFT…SVSN).

It belongs to the binding-protein-dependent transport system permease family. HisMQ subfamily.

Its subcellular location is the cell inner membrane. In terms of biological role, component of the nopaline active transport system probably consisting of four subunits: Q, M, P and T. This system is also capable of transporting octopine provided that catabolic functions are induced with nopaline. This is Nopaline transport system permease protein NocQ (nocQ) from Agrobacterium fabrum (strain C58 / ATCC 33970) (Agrobacterium tumefaciens (strain C58)).